A 306-amino-acid polypeptide reads, in one-letter code: Protein translocase subunit SecF (306 aa).

6 helical membrane-spanning segments follow: residues 17–37 (AFAV…TKGI), 134–154 (GLGM…RFQW), 158–178 (LGAI…LSFF), 185–205 (TVLA…IVIF), 232–254 (LLRT…FFGG), and 268–288 (VMAG…WLNL).

The protein belongs to the SecD/SecF family. SecF subfamily. Forms a complex with SecD. Part of the essential Sec protein translocation apparatus which comprises SecA, SecYEG and auxiliary proteins SecDF-YajC and YidC.

It localises to the cell inner membrane. Part of the Sec protein translocase complex. Interacts with the SecYEG preprotein conducting channel. SecDF uses the proton motive force (PMF) to complete protein translocation after the ATP-dependent function of SecA. This is Protein translocase subunit SecF from Pseudomonas aeruginosa (strain ATCC 15692 / DSM 22644 / CIP 104116 / JCM 14847 / LMG 12228 / 1C / PRS 101 / PAO1).